Reading from the N-terminus, the 67-residue chain is Conotoxin TsMMSK-011 (67 aa).

The N-terminal stretch at 1 to 20 (MMSKLGVLLTICLLLFPLTA) is a signal peptide. Residues 21–50 (VQLDGDQPADLPALRTQDIATDHSPWFDPV) constitute a propeptide that is removed on maturation. Cystine bridges form between Cys53–Cys65, Cys54–Cys61, and Cys58–Cys64. A 4-hydroxyproline modification is found at Pro63.

Belongs to the conotoxin M superfamily. As to expression, expressed by the venom duct.

It localises to the secreted. The chain is Conotoxin TsMMSK-011 from Conus tessulatus (Tessellate cone).